The sequence spans 497 residues: Transmembrane protein 200A (497 aa).

The Cytoplasmic segment spans residues Met-1–Ser-61. A compositionally biased stretch (polar residues) spans Thr-20 to Ser-30. Residues Thr-20 to Pro-44 form a disordered region. A helical transmembrane segment spans residues Gly-62–Gly-82. Over Tyr-83–Lys-127 the chain is Extracellular. N-linked (GlcNAc...) asparagine glycosylation is present at Asn-100. A helical membrane pass occupies residues Met-128–Leu-148. Residues His-149 to Phe-497 are Cytoplasmic-facing. Low complexity predominate over residues Ser-353–Ser-375. 2 disordered regions span residues Ser-353–Arg-385 and His-400–Arg-438. The span at Arg-427–Arg-438 shows a compositional bias: basic and acidic residues.

Belongs to the TMEM200 family.

The protein resides in the membrane. The polypeptide is Transmembrane protein 200A (tmem200a) (Danio rerio (Zebrafish)).